The sequence spans 369 residues: Anhydro-N-acetylmuramic acid kinase (369 aa).

11 to 18 serves as a coordination point for ATP; sequence GTSMDAVD.

The protein belongs to the anhydro-N-acetylmuramic acid kinase family.

It carries out the reaction 1,6-anhydro-N-acetyl-beta-muramate + ATP + H2O = N-acetyl-D-muramate 6-phosphate + ADP + H(+). The protein operates within amino-sugar metabolism; 1,6-anhydro-N-acetylmuramate degradation. Its pathway is cell wall biogenesis; peptidoglycan recycling. In terms of biological role, catalyzes the specific phosphorylation of 1,6-anhydro-N-acetylmuramic acid (anhMurNAc) with the simultaneous cleavage of the 1,6-anhydro ring, generating MurNAc-6-P. Is required for the utilization of anhMurNAc either imported from the medium or derived from its own cell wall murein, and thus plays a role in cell wall recycling. In Idiomarina loihiensis (strain ATCC BAA-735 / DSM 15497 / L2-TR), this protein is Anhydro-N-acetylmuramic acid kinase.